A 488-amino-acid polypeptide reads, in one-letter code: Ergochrome gene cluster transcriptional regulator CPUR_05433 (488 aa).

The tract at residues 1-29 (MDHSIGGRNCQSGGTTASAPRSTGSDEFP) is disordered. Residues 9-25 (NCQSGGTTASAPRSTGS) show a composition bias toward polar residues. The segment at residues 36–63 (CHACSLSKVRCSKEKPSCSRCAKRGVPC) is a DNA-binding region (zn(2)-C6 fungal-type).

It is found in the nucleus. Transcription factor; part of the gene cluster responsible for the typical purple-black color of the ergot sclerotia. The ergochrome gene cluster produces several ergot pigments including the yellow ergochrome secalonic acid and its derivatives, as well as the red anthraquinones endocrocin and clavorubin. In Claviceps purpurea (strain 20.1) (Ergot fungus), this protein is Ergochrome gene cluster transcriptional regulator CPUR_05433.